An 80-amino-acid polypeptide reads, in one-letter code: Raniseptin-8 (80 aa).

The signal sequence occupies residues 1–22 (MAFLKKSLFLVLFLGIVSLSIC). A propeptide spanning residues 23-49 (EEEKREGEEEEKQEEENEELSEEELRE) is cleaved from the precursor. Positions 27-46 (REGEEEEKQEEENEELSEEE) are disordered. The span at 30–44 (EEEEKQEEENEELSE) shows a compositional bias: acidic residues.

This sequence belongs to the frog skin active peptide (FSAP) family. Dermaseptin subfamily. In terms of tissue distribution, expressed by the skin glands.

The protein resides in the secreted. Has antibacterial activity. This is Raniseptin-8 from Boana raniceps (Chaco tree frog).